Consider the following 819-residue polypeptide: Ent-beyerene synthase KSL2, chloroplastic (819 aa).

The N-terminal 58 residues, 1-58 (MLPCLFPAYGSVVACKPSAIDRSPFGLLSQPKQTNRTLIRRPKVTKAFMAIEAMRHCS), are a transit peptide targeting the chloroplast. Positions 58 to 76 (SSSSSSEEGGAAATTAARS) are enriched in low complexity. The tract at residues 58–77 (SSSSSSEEGGAAATTAARSA) is disordered. Mg(2+) is bound by residues Asp-567, Asp-571, Asn-711, Ser-715, and Glu-719. A DDXXD motif motif is present at residues 567-571 (DDFFD).

The protein belongs to the terpene synthase family. Mg(2+) is required as a cofactor. As to expression, expressed in roots. Highly expressed in stems, flowers and panicle.

The protein localises to the plastid. The protein resides in the chloroplast. It catalyses the reaction ent-copalyl diphosphate = ent-beyerene + diphosphate. It carries out the reaction ent-copalyl diphosphate = ent-kaur-16-ene + diphosphate. It functions in the pathway secondary metabolite biosynthesis; terpenoid biosynthesis. Functionally, diterpene cyclase involved in jasmonic acid-dependent defense mechanisms in roots by mediating the biosynthesis of labdane-related diterpenoids (LRDs) natural products such as ent-beyerene, an antimicrobial compound. Catalyzes the cyclization of ent-CDP into ent-beyerene as a major and ent-kaurene as a minor product. May be involved in the catalysis of an early step of the gibberellin (GA) biosynthesis pathway. The sequence is that of Ent-beyerene synthase KSL2, chloroplastic from Oryza sativa subsp. japonica (Rice).